Consider the following 182-residue polypeptide: Peptidyl-tRNA hydrolase (182 aa).

Tyrosine 14 contacts tRNA. The Proton acceptor role is filled by histidine 19. TRNA is bound by residues phenylalanine 64, asparagine 66, and asparagine 112.

This sequence belongs to the PTH family. In terms of assembly, monomer.

It localises to the cytoplasm. The enzyme catalyses an N-acyl-L-alpha-aminoacyl-tRNA + H2O = an N-acyl-L-amino acid + a tRNA + H(+). In terms of biological role, hydrolyzes ribosome-free peptidyl-tRNAs (with 1 or more amino acids incorporated), which drop off the ribosome during protein synthesis, or as a result of ribosome stalling. Catalyzes the release of premature peptidyl moieties from peptidyl-tRNA molecules trapped in stalled 50S ribosomal subunits, and thus maintains levels of free tRNAs and 50S ribosomes. The sequence is that of Peptidyl-tRNA hydrolase from Wolbachia sp. subsp. Brugia malayi (strain TRS).